A 187-amino-acid polypeptide reads, in one-letter code: Proline-rich protein 29 (187 aa).

The segment at 133–187 (HQPPWQGEPRIQHQPPASRQEEVRDVPPPPPPSATGTVGADVPPASDYYDAESLP) is disordered.

In Mus musculus (Mouse), this protein is Proline-rich protein 29 (Prr29).